We begin with the raw amino-acid sequence, 421 residues long: Granaticin polyketide putative beta-ketoacyl synthase 1 (421 aa).

One can recognise a Ketosynthase family 3 (KS3) domain in the interval 2 to 416; the sequence is TRRVVITGVG…GFQSAMVLHR (415 aa). Residues Cys-169, His-309, and His-346 each act as for beta-ketoacyl synthase activity in the active site.

This sequence belongs to the thiolase-like superfamily. Beta-ketoacyl-ACP synthases family.

Its pathway is antibiotic biosynthesis; granaticin biosynthesis. This Streptomyces violaceoruber protein is Granaticin polyketide putative beta-ketoacyl synthase 1 (gra-orf1).